Consider the following 395-residue polypeptide: Bifunctional enzyme IspD/IspF (395 aa).

The interval M1–P237 is 2-C-methyl-D-erythritol 4-phosphate cytidylyltransferase. The tract at residues C238–P395 is 2-C-methyl-D-erythritol 2,4-cyclodiphosphate synthase. Positions 244 and 246 each coordinate a divalent metal cation. 4-CDP-2-C-methyl-D-erythritol 2-phosphate-binding positions include D244–H246 and H270–S271. An a divalent metal cation-binding site is contributed by H278. Residues D292–G294, F297–D301, T368–E371, and F375 each bind 4-CDP-2-C-methyl-D-erythritol 2-phosphate.

It in the N-terminal section; belongs to the IspD/TarI cytidylyltransferase family. IspD subfamily. In the C-terminal section; belongs to the IspF family. The cofactor is a divalent metal cation.

The catalysed reaction is 2-C-methyl-D-erythritol 4-phosphate + CTP + H(+) = 4-CDP-2-C-methyl-D-erythritol + diphosphate. It carries out the reaction 4-CDP-2-C-methyl-D-erythritol 2-phosphate = 2-C-methyl-D-erythritol 2,4-cyclic diphosphate + CMP. It participates in isoprenoid biosynthesis; isopentenyl diphosphate biosynthesis via DXP pathway; isopentenyl diphosphate from 1-deoxy-D-xylulose 5-phosphate: step 2/6. It functions in the pathway isoprenoid biosynthesis; isopentenyl diphosphate biosynthesis via DXP pathway; isopentenyl diphosphate from 1-deoxy-D-xylulose 5-phosphate: step 4/6. Its function is as follows. Bifunctional enzyme that catalyzes the formation of 4-diphosphocytidyl-2-C-methyl-D-erythritol from CTP and 2-C-methyl-D-erythritol 4-phosphate (MEP) (IspD), and catalyzes the conversion of 4-diphosphocytidyl-2-C-methyl-D-erythritol 2-phosphate (CDP-ME2P) to 2-C-methyl-D-erythritol 2,4-cyclodiphosphate (ME-CPP) with a corresponding release of cytidine 5-monophosphate (CMP) (IspF). The polypeptide is Bifunctional enzyme IspD/IspF (Nitratidesulfovibrio vulgaris (strain ATCC 29579 / DSM 644 / CCUG 34227 / NCIMB 8303 / VKM B-1760 / Hildenborough) (Desulfovibrio vulgaris)).